The sequence spans 421 residues: Imidazolonepropionase (421 aa).

His-81 and His-83 together coordinate Fe(3+). Residues His-81 and His-83 each contribute to the Zn(2+) site. Positions 90, 153, and 186 each coordinate 4-imidazolone-5-propanoate. Residue Tyr-153 coordinates N-formimidoyl-L-glutamate. Position 251 (His-251) interacts with Fe(3+). Position 251 (His-251) interacts with Zn(2+). Residue Glu-254 participates in 4-imidazolone-5-propanoate binding. Position 326 (Asp-326) interacts with Fe(3+). A Zn(2+)-binding site is contributed by Asp-326. N-formimidoyl-L-glutamate is bound by residues Asn-328 and Gly-330. Position 331 (Ser-331) interacts with 4-imidazolone-5-propanoate.

It belongs to the metallo-dependent hydrolases superfamily. HutI family. Zn(2+) serves as cofactor. Requires Fe(3+) as cofactor.

The protein resides in the cytoplasm. It catalyses the reaction 4-imidazolone-5-propanoate + H2O = N-formimidoyl-L-glutamate. The protein operates within amino-acid degradation; L-histidine degradation into L-glutamate; N-formimidoyl-L-glutamate from L-histidine: step 3/3. Catalyzes the hydrolytic cleavage of the carbon-nitrogen bond in imidazolone-5-propanoate to yield N-formimidoyl-L-glutamate. It is the third step in the universal histidine degradation pathway. The polypeptide is Imidazolonepropionase (Streptococcus pyogenes serotype M18 (strain MGAS8232)).